The following is a 445-amino-acid chain: METIFAQSSAFGKAGVAVFRISGPKSLEVLQLLTGRKDFKSRLMYYQQITFPESGELIDNAMVVYFKSPGSFTGEDVAEIYTHGSKAISIMLINALLNIPNIRLAEAGEFTKRAFLNNKFDLTAAEGIADLINAETIMQHRQAIRQAGGALEELYNNWREQLLQIISLLEAYIDFPDEDIPDSILNKVNNTHTNLINEISNYLNDNRRGELLNSGLKLAIIGPPNAGKSSLLNFLMQRDIAIVSNIAGTTRDIIEGHLDIGGYPIILQDTAGIREESSDIIEQEGIKRAINSAKTADIKIIMFDAEKLDSSINEGIIDLIDENTIIIINKIDLIEPSKIFLIEDKYKCLRVSIKNNIALNDILKNIENIAENMAGFTETPYITNQRHRHYLKQGLTYLKNFTLDNDLVLATEDIRMTVRCIGTITGVINVNEILGEIFKNFCIGK.

Positions 20, 79, and 119 each coordinate (6S)-5-formyl-5,6,7,8-tetrahydrofolate. A TrmE-type G domain is found at 215–371 (GLKLAIIGPP…ILKNIENIAE (157 aa)). N225 is a K(+) binding site. Residues 225–230 (NAGKSS), 244–250 (SNIAGTT), and 269–272 (DTAG) contribute to the GTP site. S229 contributes to the Mg(2+) binding site. S244, I246, and T249 together coordinate K(+). Position 250 (T250) interacts with Mg(2+). K445 lines the (6S)-5-formyl-5,6,7,8-tetrahydrofolate pocket.

It belongs to the TRAFAC class TrmE-Era-EngA-EngB-Septin-like GTPase superfamily. TrmE GTPase family. Homodimer. Heterotetramer of two MnmE and two MnmG subunits. K(+) is required as a cofactor.

It is found in the cytoplasm. Functionally, exhibits a very high intrinsic GTPase hydrolysis rate. Involved in the addition of a carboxymethylaminomethyl (cmnm) group at the wobble position (U34) of certain tRNAs, forming tRNA-cmnm(5)s(2)U34. The chain is tRNA modification GTPase MnmE from Rickettsia canadensis (strain McKiel).